Here is a 378-residue protein sequence, read N- to C-terminus: Mannitol-1-phosphate 5-dehydrogenase (378 aa).

4–15 lines the NAD(+) pocket; the sequence is SVHFGAGNIGRG.

Belongs to the mannitol dehydrogenase family.

The enzyme catalyses D-mannitol 1-phosphate + NAD(+) = beta-D-fructose 6-phosphate + NADH + H(+). The polypeptide is Mannitol-1-phosphate 5-dehydrogenase (Streptococcus pneumoniae (strain ATCC 700669 / Spain 23F-1)).